Here is a 365-residue protein sequence, read N- to C-terminus: Caffeic acid 3-O-methyltransferase (365 aa).

130-136 contributes to the substrate binding site; it reads MNQDKVL. Positions 162-180 are substrate binding; the sequence is AFEYHGTDPRFNKVFNRGM. Gly-208, Asp-231, Asp-251, Met-252, and Lys-265 together coordinate S-adenosyl-L-methionine. The Proton acceptor role is filled by His-269.

The protein belongs to the class I-like SAM-binding methyltransferase superfamily. Cation-independent O-methyltransferase family. COMT subfamily. Homodimer.

The enzyme catalyses (E)-caffeate + S-adenosyl-L-methionine = (E)-ferulate + S-adenosyl-L-homocysteine + H(+). Its pathway is aromatic compound metabolism; phenylpropanoid biosynthesis. In terms of biological role, catalyzes the conversion of caffeic acid to ferulic acid and of 5-hydroxyferulic acid to sinapic acid. The resulting products may subsequently be converted to the corresponding alcohols that are incorporated into lignins. This chain is Caffeic acid 3-O-methyltransferase (COMT1), found in Prunus dulcis (Almond).